A 101-amino-acid polypeptide reads, in one-letter code: Chaperone modulatory protein CbpM (101 aa).

The protein belongs to the CbpM family.

Functionally, interacts with CbpA and inhibits both the DnaJ-like co-chaperone activity and the DNA binding activity of CbpA. Together with CbpA, modulates the activity of the DnaK chaperone system. Does not inhibit the co-chaperone activity of DnaJ. The sequence is that of Chaperone modulatory protein CbpM from Salmonella paratyphi A (strain ATCC 9150 / SARB42).